Here is a 388-residue protein sequence, read N- to C-terminus: Succinate--CoA ligase [ADP-forming] subunit beta (388 aa).

The ATP-grasp domain occupies 9-244; the sequence is KQLFARYGLP…QSQEDPREAQ (236 aa). ATP is bound by residues K46, 53-55, E99, T102, and E107; that span reads GRG. Residues N199 and D213 each coordinate Mg(2+). Residues N264 and 321-323 each bind substrate; that span reads GIV.

It belongs to the succinate/malate CoA ligase beta subunit family. In terms of assembly, heterotetramer of two alpha and two beta subunits. Requires Mg(2+) as cofactor.

The catalysed reaction is succinate + ATP + CoA = succinyl-CoA + ADP + phosphate. It carries out the reaction GTP + succinate + CoA = succinyl-CoA + GDP + phosphate. It functions in the pathway carbohydrate metabolism; tricarboxylic acid cycle; succinate from succinyl-CoA (ligase route): step 1/1. Its function is as follows. Succinyl-CoA synthetase functions in the citric acid cycle (TCA), coupling the hydrolysis of succinyl-CoA to the synthesis of either ATP or GTP and thus represents the only step of substrate-level phosphorylation in the TCA. The beta subunit provides nucleotide specificity of the enzyme and binds the substrate succinate, while the binding sites for coenzyme A and phosphate are found in the alpha subunit. The chain is Succinate--CoA ligase [ADP-forming] subunit beta from Enterobacter sp. (strain 638).